The following is a 138-amino-acid chain: MRTLWIMAVLLLGVEGGLWQFENMIMKVAKKSGILSYSAYGCYCGWGGRGTPKDATDRCCFVHDCCYGKVTGCNPKLGKYTYISENGDIICGGDGPCKEVCECDRAAAICFRDNLDTYDRKTYWKYPASNCQEDSEPC.

Positions 1–16 (MRTLWIMAVLLLGVEG) are cleaved as a signal peptide. 7 disulfides stabilise this stretch: Cys-42/Cys-131, Cys-44/Cys-60, Cys-59/Cys-110, Cys-65/Cys-138, Cys-66/Cys-103, Cys-73/Cys-97, and Cys-91/Cys-101. Ca(2+) contacts are provided by Tyr-43, Gly-45, and Gly-47. Residue His-63 is part of the active site. Asp-64 provides a ligand contact to Ca(2+). Asp-104 is a catalytic residue.

This sequence belongs to the phospholipase A2 family. Group II subfamily. D49 sub-subfamily. Ca(2+) is required as a cofactor. Expressed by the venom gland.

Its subcellular location is the secreted. It carries out the reaction a 1,2-diacyl-sn-glycero-3-phosphocholine + H2O = a 1-acyl-sn-glycero-3-phosphocholine + a fatty acid + H(+). Its function is as follows. PLA2 catalyzes the calcium-dependent hydrolysis of the 2-acyl groups in 3-sn-phosphoglycerides. In Protobothrops elegans (Elegant pitviper), this protein is Acidic phospholipase A2 PePLA2.